A 97-amino-acid chain; its full sequence is Anti-sigma-YlaC factor YlaD (97 aa).

Residues His-29, Cys-33, and Cys-36 each coordinate Zn(2+). Residues 71 to 93 (YYGLLIMKAACWFGAAVAMMLII) form a helical membrane-spanning segment.

The protein belongs to the zinc-associated anti-sigma factor (ZAS) superfamily. Zn(2+) is required as a cofactor.

It is found in the cell membrane. Anti-sigma factor for YlaC. The chain is Anti-sigma-YlaC factor YlaD (ylaD) from Bacillus subtilis (strain 168).